A 312-amino-acid chain; its full sequence is MENYNQTSTDFILLGLFPPSKIGLFLFILFVLIFLMALIGNLSMILLIFLDTHLHTPMYFLLSQLSLIDLNYISTIVPKMASDFLYGNKSISFIGCGIQSFFFMTFAGAEALLLTSMAYDRYVAICFPLHYPIRMSKRMYVLMITGSWMIGSINSCAHTVYAFRIPYCKSRAINHFFCDVPAMLTLACTDTWVYEYTVFLSSTIFLVFPFTGIACSYGWVLLAVYRMHSAEGRKKAYSTCSTHLTVVTFYYAPFAYTYLCPRSLRSLTEDKVLAVFYTILTPMLNPIIYSLRNKEVMGALTRVIQNIFSVKM.

Residues 1–24 (MENYNQTSTDFILLGLFPPSKIGL) lie on the Extracellular side of the membrane. Residue N5 is glycosylated (N-linked (GlcNAc...) asparagine). Residues 25–48 (FLFILFVLIFLMALIGNLSMILLI) form a helical membrane-spanning segment. Residues 49 to 56 (FLDTHLHT) are Cytoplasmic-facing. The helical transmembrane segment at 57 to 78 (PMYFLLSQLSLIDLNYISTIVP) threads the bilayer. At 79 to 99 (KMASDFLYGNKSISFIGCGIQ) the chain is on the extracellular side. Cysteines 96 and 188 form a disulfide. The chain crosses the membrane as a helical span at residues 100–119 (SFFFMTFAGAEALLLTSMAY). At 120-138 (DRYVAICFPLHYPIRMSKR) the chain is on the cytoplasmic side. Residues 139–157 (MYVLMITGSWMIGSINSCA) traverse the membrane as a helical segment. Residues 158-194 (HTVYAFRIPYCKSRAINHFFCDVPAMLTLACTDTWVY) lie on the Extracellular side of the membrane. A helical transmembrane segment spans residues 195 to 218 (EYTVFLSSTIFLVFPFTGIACSYG). The Cytoplasmic portion of the chain corresponds to 219–235 (WVLLAVYRMHSAEGRKK). The chain crosses the membrane as a helical span at residues 236–258 (AYSTCSTHLTVVTFYYAPFAYTY). Residues 259–271 (LCPRSLRSLTEDK) lie on the Extracellular side of the membrane. A helical transmembrane segment spans residues 272–291 (VLAVFYTILTPMLNPIIYSL). The Cytoplasmic portion of the chain corresponds to 292–312 (RNKEVMGALTRVIQNIFSVKM).

The protein belongs to the G-protein coupled receptor 1 family.

It is found in the cell membrane. Its function is as follows. Odorant receptor. The protein is Olfactory receptor 2L5 (OR2L5) of Homo sapiens (Human).